Consider the following 171-residue polypeptide: Tubulin polymerization-promoting protein family member 2 (171 aa).

Residues 120 to 171 (LTDTSKYTGTHKERFDESGKGKGIAGREDVTDNSGYVSGYKGAGTYDKKGSN) form a disordered region. Over residues 129-149 (THKERFDESGKGKGIAGREDV) the composition is skewed to basic and acidic residues.

This sequence belongs to the TPPP family.

It is found in the cytoplasm. The protein localises to the cytosol. It localises to the cell projection. The protein resides in the cilium. Its subcellular location is the flagellum. Functionally, probable regulator of microtubule dynamics required for sperm motility. In contrast to other members of the family, has no microtubule bundling activity. This Bos taurus (Bovine) protein is Tubulin polymerization-promoting protein family member 2.